Here is a 437-residue protein sequence, read N- to C-terminus: Aspartic proteinase CDR1 (437 aa).

The N-terminal stretch at 1–25 (MASLFSSVLLSLCLLSSLFLSNANA) is a signal peptide. The propeptide at 26–73 (KPKLGFTADLIHRDSPKSPFYNPMETSSQRLRNAIHRSVNRVFHFTEK) is activation peptide. The 341-residue stretch at 90-430 (YLMNVSIGTP…DTVSKTVSFK (341 aa)) folds into the Peptidase A1 domain. A glycan (N-linked (GlcNAc...) asparagine) is linked at asparagine 93. Catalysis depends on residues aspartate 108 and aspartate 319.

It belongs to the peptidase A1 family.

It localises to the secreted. The protein localises to the extracellular space. Its subcellular location is the apoplast. Involved in salicylic acid-dependent inducible resistance responses. May release an endogenous peptide elicitor required for the activation of inducible resistance mechanisms. Possesses protease activity in vitro. The protein is Aspartic proteinase CDR1 (CDR1) of Arabidopsis thaliana (Mouse-ear cress).